We begin with the raw amino-acid sequence, 61 residues long: Large ribosomal subunit protein uL30 (61 aa).

It belongs to the universal ribosomal protein uL30 family. In terms of assembly, part of the 50S ribosomal subunit.

This is Large ribosomal subunit protein uL30 from Chlorobium luteolum (strain DSM 273 / BCRC 81028 / 2530) (Pelodictyon luteolum).